The chain runs to 117 residues: Immunoglobulin heavy variable 3-11 (117 aa).

The signal sequence occupies residues 1–19; the sequence is MEFGLSWVFLVAIIKGVQC. The residue at position 20 (Gln20) is a Pyrrolidone carboxylic acid. The segment at 20 to 44 is framework-1; it reads QVQLVESGGGLVKPGGSLRLSCAAS. Residues 20-117 enclose the Ig-like domain; that stretch reads QVQLVESGGG…EDTAVYYCAR (98 aa). Cys41 and Cys115 form a disulfide bridge. A complementarity-determining-1 region spans residues 45–52; sequence GFTFSDYY. The tract at residues 53 to 69 is framework-2; the sequence is MSWIRQAPGKGLEWVSY. Positions 70–77 are complementarity-determining-2; sequence ISSSSSYT. The tract at residues 78–115 is framework-3; sequence NYADSVKGRFTISRDNAKNSLYLQMNSLRAEDTAVYYC. Residues 116 to 117 form a complementarity-determining-3 region; the sequence is AR.

Immunoglobulins are composed of two identical heavy chains and two identical light chains; disulfide-linked.

The protein localises to the secreted. It localises to the cell membrane. Functionally, v region of the variable domain of immunoglobulin heavy chains that participates in the antigen recognition. Immunoglobulins, also known as antibodies, are membrane-bound or secreted glycoproteins produced by B lymphocytes. In the recognition phase of humoral immunity, the membrane-bound immunoglobulins serve as receptors which, upon binding of a specific antigen, trigger the clonal expansion and differentiation of B lymphocytes into immunoglobulins-secreting plasma cells. Secreted immunoglobulins mediate the effector phase of humoral immunity, which results in the elimination of bound antigens. The antigen binding site is formed by the variable domain of one heavy chain, together with that of its associated light chain. Thus, each immunoglobulin has two antigen binding sites with remarkable affinity for a particular antigen. The variable domains are assembled by a process called V-(D)-J rearrangement and can then be subjected to somatic hypermutations which, after exposure to antigen and selection, allow affinity maturation for a particular antigen. This is Immunoglobulin heavy variable 3-11 from Homo sapiens (Human).